A 132-amino-acid polypeptide reads, in one-letter code: uncharacterized protein (132 aa).

This is an uncharacterized protein from Archaeoglobus fulgidus (strain ATCC 49558 / DSM 4304 / JCM 9628 / NBRC 100126 / VC-16).